The following is a 484-amino-acid chain: tRNA sulfurtransferase (484 aa).

The region spanning 63–167 (EAFGERLACI…NDNLYLIDKR (105 aa)) is the THUMP domain. ATP contacts are provided by residues 185–186 (LI), Lys-267, Gly-289, and Gln-298. A disulfide bridge links Cys-346 with Cys-458. Positions 406–484 (INANEIIIDV…GYTNVKVYRP (79 aa)) constitute a Rhodanese domain. Residue Cys-458 is the Cysteine persulfide intermediate of the active site.

It belongs to the ThiI family.

The protein resides in the cytoplasm. It carries out the reaction [ThiI sulfur-carrier protein]-S-sulfanyl-L-cysteine + a uridine in tRNA + 2 reduced [2Fe-2S]-[ferredoxin] + ATP + H(+) = [ThiI sulfur-carrier protein]-L-cysteine + a 4-thiouridine in tRNA + 2 oxidized [2Fe-2S]-[ferredoxin] + AMP + diphosphate. It catalyses the reaction [ThiS sulfur-carrier protein]-C-terminal Gly-Gly-AMP + S-sulfanyl-L-cysteinyl-[cysteine desulfurase] + AH2 = [ThiS sulfur-carrier protein]-C-terminal-Gly-aminoethanethioate + L-cysteinyl-[cysteine desulfurase] + A + AMP + 2 H(+). It participates in cofactor biosynthesis; thiamine diphosphate biosynthesis. In terms of biological role, catalyzes the ATP-dependent transfer of a sulfur to tRNA to produce 4-thiouridine in position 8 of tRNAs, which functions as a near-UV photosensor. Also catalyzes the transfer of sulfur to the sulfur carrier protein ThiS, forming ThiS-thiocarboxylate. This is a step in the synthesis of thiazole, in the thiamine biosynthesis pathway. The sulfur is donated as persulfide by IscS. This is tRNA sulfurtransferase from Shewanella halifaxensis (strain HAW-EB4).